The chain runs to 150 residues: AN1-type zinc finger protein TMC1 (150 aa).

A disordered region spans residues 1–82 (MSDINEIEIP…TKKTTKKKKK (82 aa)). Position 2 is an N-acetylserine (S2). Over residues 23 to 33 (DPMHEIEDKST) the composition is skewed to basic and acidic residues. 2 positions are modified to phosphoserine: S43 and S54. Residues 53–70 (NSRSSSNSSVTSTGQSSR) are compositionally biased toward low complexity. Basic residues predominate over residues 71–82 (RVTKKTTKKKKK). The segment at 79–128 (KKKKNACYFDTCSSAASKFIGDCNFCKGHFCSKHRLMENHACNGLTSCKE) adopts an AN1-type zinc-finger fold. C85, C90, C101, C104, C109, H112, H118, and C120 together coordinate Zn(2+).

Its subcellular location is the nucleus. Its function is as follows. May have a role in protecting cells from metalloid-induced proteotoxicity. This is AN1-type zinc finger protein TMC1 from Saccharomyces cerevisiae (strain ATCC 204508 / S288c) (Baker's yeast).